We begin with the raw amino-acid sequence, 476 residues long: Sulfate adenylyltransferase subunit 1 (476 aa).

The 216-residue stretch at 24 to 239 (KSLLRFLTCG…LLETVDVDHE (216 aa)) folds into the tr-type G domain. Residues 33–40 (GSVDDGKS) form a G1 region. 33-40 (GSVDDGKS) lines the GTP pocket. The segment at 91 to 95 (GITID) is G2. The interval 112 to 115 (DTPG) is G3. Residues 112 to 116 (DTPGH) and 167 to 170 (NKMD) contribute to the GTP site. Positions 167 to 170 (NKMD) are G4. A G5 region spans residues 205-207 (SAL).

The protein belongs to the TRAFAC class translation factor GTPase superfamily. Classic translation factor GTPase family. CysN/NodQ subfamily. Heterodimer composed of CysD, the smaller subunit, and CysN.

The enzyme catalyses sulfate + ATP + H(+) = adenosine 5'-phosphosulfate + diphosphate. It functions in the pathway sulfur metabolism; hydrogen sulfide biosynthesis; sulfite from sulfate: step 1/3. Its function is as follows. With CysD forms the ATP sulfurylase (ATPS) that catalyzes the adenylation of sulfate producing adenosine 5'-phosphosulfate (APS) and diphosphate, the first enzymatic step in sulfur assimilation pathway. APS synthesis involves the formation of a high-energy phosphoric-sulfuric acid anhydride bond driven by GTP hydrolysis by CysN coupled to ATP hydrolysis by CysD. The polypeptide is Sulfate adenylyltransferase subunit 1 (Vibrio campbellii (strain ATCC BAA-1116)).